The primary structure comprises 654 residues: Pyoverdine export ATP-binding/permease protein PvdT (654 aa).

In terms of domain architecture, ABC transporter spans 6-245 (IELCDIRKAY…AHKGIQAEEL (240 aa)). 43–50 (GASGSGKS) provides a ligand contact to ATP. Helical transmembrane passes span 282–302 (ALTLLGIIIGVASVVVMLAVG), 529–549 (LSLMLGAIAAISLLVGGIGVM), 584–604 (AIMLSMVGGLTGIALALVVGA), and 614–634 (AFALPAIVGAFACAVITGVVF).

It belongs to the ABC transporter superfamily. Macrolide exporter (TC 3.A.1.122) family. Part of the tripartite efflux system PvdRT-OpmQ, which is composed of an inner membrane component with both ATPase and permease domains, PvdT, a periplasmic membrane fusion protein, PvdR, and an outer membrane component, OpmQ.

The protein localises to the cell inner membrane. Has a basal ATPase activity that is stimulated by PvdR. In vitro, interaction with PVD influences the affinity of PvdT to PvdR. Part of the tripartite efflux system PvdRT-OpmQ required for the secretion into the extracellular milieu of the siderophore pyoverdine (PVD), which is involved in iron acquisition. This subunit binds PVD and drives its secretion by hydrolyzing ATP. The system is responsible for export of newly synthesized PVD after the final steps of biosynthesis have taken place in the periplasm. It is also responsible for recycling of PVD after internalization of ferri-PVD into the periplasm by the outer-membrane receptor FpvA and release of iron from PVD, thus making PVD available for new cycles of iron uptake. Contributes to resistance against ampicillin. In Pseudomonas putida (strain ATCC 47054 / DSM 6125 / CFBP 8728 / NCIMB 11950 / KT2440), this protein is Pyoverdine export ATP-binding/permease protein PvdT.